Consider the following 472-residue polypeptide: Putative diacyglycerol O-acyltransferase MT3172 (472 aa).

Catalysis depends on H139, which acts as the Proton acceptor. A disordered region spans residues 217 to 238 (DRRVPPTFDRSAPPGPFQRGLS).

This sequence belongs to the long-chain O-acyltransferase family.

The catalysed reaction is an acyl-CoA + a 1,2-diacyl-sn-glycerol = a triacyl-sn-glycerol + CoA. Its pathway is glycerolipid metabolism; triacylglycerol biosynthesis. The protein is Putative diacyglycerol O-acyltransferase MT3172 of Mycobacterium tuberculosis (strain CDC 1551 / Oshkosh).